The primary structure comprises 427 residues: 3-phosphoshikimate 1-carboxyvinyltransferase (427 aa).

Residues Lys22, Ser23, and Arg27 each coordinate 3-phosphoshikimate. Position 22 (Lys22) interacts with phosphoenolpyruvate. Gly96 and Arg124 together coordinate phosphoenolpyruvate. Ser169, Ser170, Gln171, Ser197, Asp313, Asn336, and Lys340 together coordinate 3-phosphoshikimate. Gln171 provides a ligand contact to phosphoenolpyruvate. Residue Asp313 is the Proton acceptor of the active site. Phosphoenolpyruvate-binding residues include Arg344, Arg386, and Lys411.

The protein belongs to the EPSP synthase family. Monomer.

Its subcellular location is the cytoplasm. The catalysed reaction is 3-phosphoshikimate + phosphoenolpyruvate = 5-O-(1-carboxyvinyl)-3-phosphoshikimate + phosphate. Its pathway is metabolic intermediate biosynthesis; chorismate biosynthesis; chorismate from D-erythrose 4-phosphate and phosphoenolpyruvate: step 6/7. Its function is as follows. Catalyzes the transfer of the enolpyruvyl moiety of phosphoenolpyruvate (PEP) to the 5-hydroxyl of shikimate-3-phosphate (S3P) to produce enolpyruvyl shikimate-3-phosphate and inorganic phosphate. In Shigella flexneri serotype 5b (strain 8401), this protein is 3-phosphoshikimate 1-carboxyvinyltransferase.